We begin with the raw amino-acid sequence, 170 residues long: Single-stranded DNA-binding protein (170 aa).

The tract at residues 1-26 (MSNELKQVEQTEEAVVVSETKDYIKV) is oligomerization.

This sequence belongs to the phi29likevirus single-strand-binding protein family. In terms of assembly, hexamer.

Its function is as follows. Single-stranded DNA-binding protein required for the elongation during viral DNA replication by strand displacement. Displaced viral DNA strands are transiently coated with the ssDNA-binding protein and therefore protected againt nucleases. The latter is then probably removed by the replisome that performs lagging strand synthesis or during the events that lead up to the recombination process. Has helix-destabilizing activity since it removes secondary structure from the ssDNA in replicative intermediates. In Bacillus subtilis (Bacteriophage GA-1), this protein is Single-stranded DNA-binding protein.